Consider the following 217-residue polypeptide: Large ribosomal subunit protein uL3 (217 aa).

The segment at 131 to 155 is disordered; that stretch reads FSSSRASHGNSRSHNVPGSIGMAQD. Positions 132–145 are enriched in low complexity; the sequence is SSSRASHGNSRSHN. Glutamine 154 is modified (N5-methylglutamine).

The protein belongs to the universal ribosomal protein uL3 family. As to quaternary structure, part of the 50S ribosomal subunit. Forms a cluster with proteins L14 and L19. Methylated by PrmB.

One of the primary rRNA binding proteins, it binds directly near the 3'-end of the 23S rRNA, where it nucleates assembly of the 50S subunit. This Nitrosomonas eutropha (strain DSM 101675 / C91 / Nm57) protein is Large ribosomal subunit protein uL3.